The following is a 397-amino-acid chain: 3-hydroxy-3-methylglutaryl-coenzyme A reductase (397 aa).

Catalysis depends on charge relay system residues E96 and D301. The Proton donor role is filled by H391.

It belongs to the HMG-CoA reductase family.

The enzyme catalyses (R)-mevalonate + 2 NADP(+) + CoA = (3S)-3-hydroxy-3-methylglutaryl-CoA + 2 NADPH + 2 H(+). Its pathway is metabolic intermediate biosynthesis; (R)-mevalonate biosynthesis; (R)-mevalonate from acetyl-CoA: step 3/3. Functionally, converts HMG-CoA to mevalonate. This chain is 3-hydroxy-3-methylglutaryl-coenzyme A reductase (hmgA), found in Methanothermobacter thermautotrophicus (strain ATCC 29096 / DSM 1053 / JCM 10044 / NBRC 100330 / Delta H) (Methanobacterium thermoautotrophicum).